The chain runs to 332 residues: Cytoplasmic phosphatidylinositol transfer protein 1 (332 aa).

A phosphoserine mark is found at S119, S270, and S274. Positions 267-285 (SVRSAPSSAPSTPLSTDAP) are enriched in low complexity. Residues 267-332 (SVRSAPSSAP…SDKPCRPKSE (66 aa)) form a disordered region. T278 is modified (phosphothreonine). Residues 322-332 (SSDKPCRPKSE) show a composition bias toward basic and acidic residues.

The protein belongs to the PtdIns transfer protein family. PI transfer class IIB subfamily. Ubiquitously expressed.

It is found in the cytoplasm. The catalysed reaction is a 1,2-diacyl-sn-glycero-3-phospho-(1D-myo-inositol)(in) = a 1,2-diacyl-sn-glycero-3-phospho-(1D-myo-inositol)(out). The enzyme catalyses a 1,2-diacyl-sn-glycero-3-phosphate(in) = a 1,2-diacyl-sn-glycero-3-phosphate(out). Catalyzes the transfer of phosphatidylinositol (PI) and phosphatidic acid (PA) between membranes. Binds PA derived from the phospholipase D signaling pathway and among the cellular PA species, preferably binds to the C16:0/16:1 and C16:1/18:1 PA species. Functionally, catalyzes the transfer of phosphatidylinositol between membranes. The chain is Cytoplasmic phosphatidylinositol transfer protein 1 (PITPNC1) from Homo sapiens (Human).